The sequence spans 1091 residues: ATP-dependent RNA helicase ddx54 (1091 aa).

2 disordered regions span residues 1-63 (MVKP…KEEF) and 150-231 (DNSN…KTGG). Residues 26 to 35 (MKGKKLETKS) are compositionally biased toward basic and acidic residues. The segment covering 150 to 161 (DNSNFDNNGDQF) has biased composition (polar residues). Basic and acidic residues predominate over residues 196–207 (KKEEIESSEKFE). Residues 230–258 (GGFQSMDLTKNLLKAILKKGFNVPTPIQR) carry the Q motif motif. The region spanning 261–433 (IPMILDGHDI…RAGLNNPKLI (173 aa)) is the Helicase ATP-binding domain. 274–281 (ARTGSGKT) is an ATP binding site. The DEAD box signature appears at 381 to 384 (DEAD). Residues 478 to 632 (TETTTTTTTN…KFQYEGQTIN (155 aa)) form the Helicase C-terminal domain. Disordered stretches follow at residues 801 to 896 (EEML…TPEN) and 933 to 1091 (KRKG…KSRK). Residues 814–823 (DNNKDIKMNE) are compositionally biased toward basic and acidic residues. Acidic residues predominate over residues 824-855 (NDDENDDDDEEGENDDDEEEENEKDEDDEEDE). 3 stretches are compositionally biased toward basic and acidic residues: residues 865–874 (ESSDKNDNNK), 944–975 (DADR…EEWK), and 1008–1019 (QGREKEKKDNKA). Residues 1020–1029 (SHAKGSHGLK) are compositionally biased toward basic residues. The span at 1031–1052 (RPSELKDKNQISKNRSEKERKM) shows a compositional bias: basic and acidic residues. Residues 1068 to 1079 (SGGGGGGKGSKF) show a composition bias toward gly residues.

Belongs to the DEAD box helicase family. DDX54/DBP10 subfamily.

Its subcellular location is the nucleus. It localises to the nucleolus. The enzyme catalyses ATP + H2O = ADP + phosphate + H(+). Functionally, ATP-binding RNA helicase which may be involved in the ribosome biogenesis. The polypeptide is ATP-dependent RNA helicase ddx54 (helA) (Dictyostelium discoideum (Social amoeba)).